We begin with the raw amino-acid sequence, 310 residues long: tRNA pseudouridine synthase B (310 aa).

Catalysis depends on D47, which acts as the Nucleophile.

The protein belongs to the pseudouridine synthase TruB family. Type 1 subfamily.

It catalyses the reaction uridine(55) in tRNA = pseudouridine(55) in tRNA. Functionally, responsible for synthesis of pseudouridine from uracil-55 in the psi GC loop of transfer RNAs. In Psychromonas ingrahamii (strain DSM 17664 / CCUG 51855 / 37), this protein is tRNA pseudouridine synthase B.